Consider the following 1142-residue polypeptide: Error-prone DNA polymerase (1142 aa).

Residues Thr-291–Arg-361 are disordered. Composition is skewed to low complexity over residues Leu-311–Pro-320 and Gly-327–Pro-344. The span at Gly-345 to Ala-355 shows a compositional bias: gly residues.

Belongs to the DNA polymerase type-C family. DnaE2 subfamily.

It localises to the cytoplasm. It catalyses the reaction DNA(n) + a 2'-deoxyribonucleoside 5'-triphosphate = DNA(n+1) + diphosphate. Its function is as follows. DNA polymerase involved in damage-induced mutagenesis and translesion synthesis (TLS). It is not the major replicative DNA polymerase. This chain is Error-prone DNA polymerase, found in Anaeromyxobacter dehalogenans (strain 2CP-1 / ATCC BAA-258).